A 199-amino-acid polypeptide reads, in one-letter code: MKLLIDFFPIILFFVAFKVWGIYTATAVAIVATIAQIAYLRVRHGKVEPMQWVSLGVIVLFGGATLLAHNDTFIKWKPSVLYWLMGSALLIGQLVFRKNLLRSVMGAQLQLPDNAWRTLNWSWAAFFAVMGALNLVIAYRFDTDTWVNFKLFGGMGLMLVFVIGQAIYMSRFMQEDKGEAAAATPDALPPPGVQQDKQP.

A run of 5 helical transmembrane segments spans residues 3 to 23 (LLIDFFPIILFFVAFKVWGIY), 47 to 67 (VEPMQWVSLGVIVLFGGATLL), 76 to 96 (WKPSVLYWLMGSALLIGQLVF), 119 to 139 (LNWSWAAFFAVMGALNLVIAY), and 149 to 169 (FKLFGGMGLMLVFVIGQAIYM). Residues 180 to 199 (AAAATPDALPPPGVQQDKQP) are disordered.

Belongs to the YciB family.

It is found in the cell inner membrane. Its function is as follows. Plays a role in cell envelope biogenesis, maintenance of cell envelope integrity and membrane homeostasis. This Delftia acidovorans (strain DSM 14801 / SPH-1) protein is Inner membrane-spanning protein YciB.